Consider the following 347-residue polypeptide: Ribosomal RNA small subunit methyltransferase H (347 aa).

S-adenosyl-L-methionine is bound by residues 47–49, D64, F91, D114, and Q121; that span reads GGY. The disordered stretch occupies residues 291–347; it reads PAVKGAVGPTAEEEERNPRARSAKLRAGIRTENPPLEDDLSLFGLPKLPETNELARS.

Belongs to the methyltransferase superfamily. RsmH family.

It is found in the cytoplasm. The catalysed reaction is cytidine(1402) in 16S rRNA + S-adenosyl-L-methionine = N(4)-methylcytidine(1402) in 16S rRNA + S-adenosyl-L-homocysteine + H(+). Functionally, specifically methylates the N4 position of cytidine in position 1402 (C1402) of 16S rRNA. The protein is Ribosomal RNA small subunit methyltransferase H of Brucella anthropi (strain ATCC 49188 / DSM 6882 / CCUG 24695 / JCM 21032 / LMG 3331 / NBRC 15819 / NCTC 12168 / Alc 37) (Ochrobactrum anthropi).